Consider the following 371-residue polypeptide: 4-hydroxy-3-methylbut-2-en-1-yl diphosphate synthase (flavodoxin) (371 aa).

[4Fe-4S] cluster is bound by residues Cys269, Cys272, Cys304, and Glu311.

This sequence belongs to the IspG family. The cofactor is [4Fe-4S] cluster.

It carries out the reaction (2E)-4-hydroxy-3-methylbut-2-enyl diphosphate + oxidized [flavodoxin] + H2O + 2 H(+) = 2-C-methyl-D-erythritol 2,4-cyclic diphosphate + reduced [flavodoxin]. It functions in the pathway isoprenoid biosynthesis; isopentenyl diphosphate biosynthesis via DXP pathway; isopentenyl diphosphate from 1-deoxy-D-xylulose 5-phosphate: step 5/6. Functionally, converts 2C-methyl-D-erythritol 2,4-cyclodiphosphate (ME-2,4cPP) into 1-hydroxy-2-methyl-2-(E)-butenyl 4-diphosphate. The protein is 4-hydroxy-3-methylbut-2-en-1-yl diphosphate synthase (flavodoxin) of Acinetobacter baumannii (strain AB307-0294).